A 448-amino-acid polypeptide reads, in one-letter code: Chromosomal replication initiator protein DnaA (448 aa).

The segment at 1-73 (MNAQLKQLWT…INAIKLITSK (73 aa)) is domain I, interacts with DnaA modulators. The interval 73 to 109 (KKYNIEFSITSEEIFNNQQLKPKSSNDNIVVNDEMTS) is domain II. Residues 110–326 (ILNPKYTFDS…GALIRIVAYS (217 aa)) form a domain III, AAA+ region region. Residues Gly154, Gly156, Lys157, and Thr158 each coordinate ATP. Residues 327 to 448 (SLTNREISVD…DDLNKKITNN (122 aa)) are domain IV, binds dsDNA.

The protein belongs to the DnaA family. In terms of assembly, oligomerizes as a right-handed, spiral filament on DNA at oriC.

The protein resides in the cytoplasm. Plays an essential role in the initiation and regulation of chromosomal replication. ATP-DnaA binds to the origin of replication (oriC) to initiate formation of the DNA replication initiation complex once per cell cycle. Binds the DnaA box (a 9 base pair repeat at the origin) and separates the double-stranded (ds)DNA. Forms a right-handed helical filament on oriC DNA; dsDNA binds to the exterior of the filament while single-stranded (ss)DNA is stabiized in the filament's interior. The ATP-DnaA-oriC complex binds and stabilizes one strand of the AT-rich DNA unwinding element (DUE), permitting loading of DNA polymerase. After initiation quickly degrades to an ADP-DnaA complex that is not apt for DNA replication. Binds acidic phospholipids. The protein is Chromosomal replication initiator protein DnaA of Clostridium novyi (strain NT).